A 245-amino-acid chain; its full sequence is 1-(5-phosphoribosyl)-5-[(5-phosphoribosylamino)methylideneamino] imidazole-4-carboxamide isomerase (245 aa).

Asp8 serves as the catalytic Proton acceptor. Asp130 serves as the catalytic Proton donor.

Belongs to the HisA/HisF family.

The protein resides in the cytoplasm. The catalysed reaction is 1-(5-phospho-beta-D-ribosyl)-5-[(5-phospho-beta-D-ribosylamino)methylideneamino]imidazole-4-carboxamide = 5-[(5-phospho-1-deoxy-D-ribulos-1-ylimino)methylamino]-1-(5-phospho-beta-D-ribosyl)imidazole-4-carboxamide. Its pathway is amino-acid biosynthesis; L-histidine biosynthesis; L-histidine from 5-phospho-alpha-D-ribose 1-diphosphate: step 4/9. The protein is 1-(5-phosphoribosyl)-5-[(5-phosphoribosylamino)methylideneamino] imidazole-4-carboxamide isomerase of Teredinibacter turnerae (strain ATCC 39867 / T7901).